Here is a 238-residue protein sequence, read N- to C-terminus: 2-C-methyl-D-erythritol 4-phosphate cytidylyltransferase (238 aa).

The protein belongs to the IspD/TarI cytidylyltransferase family. IspD subfamily.

The catalysed reaction is 2-C-methyl-D-erythritol 4-phosphate + CTP + H(+) = 4-CDP-2-C-methyl-D-erythritol + diphosphate. It participates in isoprenoid biosynthesis; isopentenyl diphosphate biosynthesis via DXP pathway; isopentenyl diphosphate from 1-deoxy-D-xylulose 5-phosphate: step 2/6. Its function is as follows. Catalyzes the formation of 4-diphosphocytidyl-2-C-methyl-D-erythritol from CTP and 2-C-methyl-D-erythritol 4-phosphate (MEP). This Pelotomaculum thermopropionicum (strain DSM 13744 / JCM 10971 / SI) protein is 2-C-methyl-D-erythritol 4-phosphate cytidylyltransferase.